Reading from the N-terminus, the 568-residue chain is MLFKELVSLYESLRSTSSRLEKTAMIAAFLQQAPVDELPVIVTFLTGRIFPEWDQRKIGIASQSMIKIISTITHNPEDAVVESYKKTGHLGVTAEEMFQKRRQVTFFEPEDITVKEVAETFYEIARSSGAGSSAKKQKILIGLLHRATTPKEAHYIVSLTIEYVLSGAKEGVMEDAIGQAFGATLDQVRRAHMLTSDLGETARIAKTEGAAGLEAITIRPMRPVRPMLAQNVSSIREALDTMGGVAEFEMKYDGARLQIHKVGKDVKLYSRRLEDLTDALPEIVGYVRESVKSDTAILDSECIAIDKDTGRPIPFQNILTRLRRIHKVEETQKQFPLILRPFDVLFNQGQSTIDLPLRERRKILEEIVIATDSVIQPARALVTDQEEKAQELFEESVKSGNEGLMGKDLNATYTPGVRGKKMVKIKSVLDTLDLAIVSAEWGHGRKAGWLTSFEVAALDEETGDYVILGRVASGFSDEQLIEMTEKLKPLITGEHGRIVDVRPEIIVEVKFEEIQKSPIYSSGYALRFPRLVRVRDDLSPEEVNSFTRVMNIYNVQQRYSISENGLRK.

ATP is bound at residue Glu-249. Residue Lys-251 is the N6-AMP-lysine intermediate of the active site. Residues Arg-256, Arg-271, Glu-301, Phe-342, Arg-418, and Lys-424 each contribute to the ATP site.

The protein belongs to the ATP-dependent DNA ligase family. Requires Mg(2+) as cofactor.

The catalysed reaction is ATP + (deoxyribonucleotide)n-3'-hydroxyl + 5'-phospho-(deoxyribonucleotide)m = (deoxyribonucleotide)n+m + AMP + diphosphate.. Its function is as follows. DNA ligase that seals nicks in double-stranded DNA during DNA replication, DNA recombination and DNA repair. This chain is DNA ligase, found in Methanocella arvoryzae (strain DSM 22066 / NBRC 105507 / MRE50).